A 433-amino-acid chain; its full sequence is MINLFRGLLVVLCFASAMVAAEEKNILVTSGSDRAAPIAVVPFGWQGGNVLPEDMAEIISNDLRNSGYYAPIPKQNMISLPTQASEVIFRDWKALGAQYVMVGNITPAGGRLQIQYALFNVATEQQVLTGNVSGTNDQLRDMAHYIADQSFEKLTGIKGAFSTRMLYVTAERFSENNTRYTLQRSDYDGARAVTLLQSREPILSPRFAPDGKRIAYVSFEQKRPRIFVQHIDTGRREQITNFEGLNGAPAWSPDGSKLAFVLSKDGNPEIYVINLASRQLSRVTNDSSIDTEPFFGKDGSTLYFTSDRGGKPQIYKTNINGGGAERVTFVGNYNANPKLSADEKTLVMIHRQDGFTNFKVAVQDLARGSVKILTDSNLDESPTVAPNGTMVIYATRQQGRGVLMLVSINGRVRLPLPTAQGEVREPSWSPYLN.

The first 21 residues, 1–21, serve as a signal peptide directing secretion; it reads MINLFRGLLVVLCFASAMVAA.

The protein belongs to the TolB family. The Tol-Pal system is composed of five core proteins: the inner membrane proteins TolA, TolQ and TolR, the periplasmic protein TolB and the outer membrane protein Pal. They form a network linking the inner and outer membranes and the peptidoglycan layer.

The protein resides in the periplasm. Its function is as follows. Part of the Tol-Pal system, which plays a role in outer membrane invagination during cell division and is important for maintaining outer membrane integrity. The polypeptide is Tol-Pal system protein TolB (Pseudomonas syringae pv. tomato (strain ATCC BAA-871 / DC3000)).